The primary structure comprises 169 residues: X polypeptide (169 aa).

This sequence belongs to the IagB/IpgF/P19 family.

The protein is X polypeptide (X) of Escherichia coli.